Here is a 485-residue protein sequence, read N- to C-terminus: Phosphoglucosamine mutase (485 aa).

Ser-133 (phosphoserine intermediate) is an active-site residue. Positions 133, 274, 276, and 278 each coordinate Mg(2+). Ser-133 is subject to Phosphoserine.

Belongs to the phosphohexose mutase family. Mg(2+) is required as a cofactor. Post-translationally, activated by phosphorylation.

It catalyses the reaction alpha-D-glucosamine 1-phosphate = D-glucosamine 6-phosphate. Functionally, catalyzes the conversion of glucosamine-6-phosphate to glucosamine-1-phosphate. This chain is Phosphoglucosamine mutase, found in Crocosphaera subtropica (strain ATCC 51142 / BH68) (Cyanothece sp. (strain ATCC 51142)).